We begin with the raw amino-acid sequence, 86 residues long: Sulmotoxin 2 (86 aa).

An N-terminal signal peptide occupies residues 1 to 21 (MKTLLLALAVVAFMCLDSVYP). Disulfide bonds link cysteine 24–cysteine 47, cysteine 27–cysteine 35, cysteine 41–cysteine 62, cysteine 66–cysteine 77, and cysteine 78–cysteine 83.

It belongs to the three-finger toxin family. Ancestral subfamily. Boigatoxin sub-subfamily. As to quaternary structure, monomer. Expressed by the venom gland.

Its subcellular location is the secreted. Its function is as follows. Probable neurotoxin. Is not toxic to mice and geckos. The polypeptide is Sulmotoxin 2 (Spilotes sulphureus (Amazon puffing snake)).